Consider the following 262-residue polypeptide: ATP synthase subunit a (262 aa).

5 consecutive transmembrane segments (helical) span residues 26–46, 86–106, 130–150, 204–226, and 240–260; these read VHID…FVFS, VAPL…IDLI, DISA…FYTI, LIFI…GIPL, and LQAF…YNKA.

It belongs to the ATPase A chain family. F-type ATPases have 2 components, CF(1) - the catalytic core - and CF(0) - the membrane proton channel. CF(1) has five subunits: alpha(3), beta(3), gamma(1), delta(1), epsilon(1). CF(0) has three main subunits: a(1), b(2) and c(9-12). The alpha and beta chains form an alternating ring which encloses part of the gamma chain. CF(1) is attached to CF(0) by a central stalk formed by the gamma and epsilon chains, while a peripheral stalk is formed by the delta and b chains.

The protein localises to the cell inner membrane. In terms of biological role, key component of the proton channel; it plays a direct role in the translocation of protons across the membrane. The polypeptide is ATP synthase subunit a (Haemophilus influenzae (strain PittEE)).